Consider the following 319-residue polypeptide: MWKVIIRRILLMIPQLFILSILVFFFAKLMPGDPFSGLIGPHTDPHEVEALRRAAGLYDPWWEQYLRWLGNAIHGNLGMSYNLKEPVMTVIGHRAINTFWMSLLSVILTYLFAIPMSIVAARNEGKWQDQLWLTYNSITFGIPPYVFYLLIIFIFGYSLNWFPTGGTVSPDAMGIIPVFFSKIYHMILPAFSLAVFGTVGIFTYFRSGILDEQTQDYVRTARAKGVKEKVIFRRHILRNASLPIASNFGFVITGLLGGAIFAETIFGYPGLGQLFITSISGRDYSMITALILLNGFLGLLGALLSDIIMAMVDPRIRIQ.

The next 6 helical transmembrane spans lie at 9–29, 99–119, 137–157, 183–203, 248–268, and 289–309; these read ILLMIPQLFILSILVFFFAKL, FWMSLLSVILTYLFAIPMSIV, SITFGIPPYVFYLLIIFIFGY, IYHMILPAFSLAVFGTVGIFT, FGFVITGLLGGAIFAETIFGY, and ALILLNGFLGLLGALLSDIIM. The region spanning 95 to 305 is the ABC transmembrane type-1 domain; the sequence is AINTFWMSLL…FLGLLGALLS (211 aa).

Belongs to the binding-protein-dependent transport system permease family. OppBC subfamily. As to quaternary structure, the complex is composed of two ATP-binding proteins (OppD and OppF), two transmembrane proteins (OppB and OppC) and a solute-binding protein (OppA).

The protein resides in the cell membrane. In terms of biological role, part of the ABC transporter complex OppABCDF involved in the uptake of oligopeptides. Probably responsible for the translocation of the substrate across the membrane. Essential for uptake of peptides larger than three amino acids and for growth in milk. This is Oligopeptide transport system permease protein OppB (oppB) from Lactococcus lactis subsp. lactis (strain IL1403) (Streptococcus lactis).